A 184-amino-acid chain; its full sequence is MFSFVQRFQNVSNQAFSMGIVMVVFIMASSYYQLINNNAFSVPSNIDNVKTLINVRTSRYFGSQRGKAKENMKIKFDLNTDLTPLFNWNTKQVFVYLTAEYNSTEKITSEVTFWDKIIKSKDDAVIDVNDLRSKYSIWDIEDGKFEGKDLVFKLHWNVQPWVGLLTYGETVGNYTLTVENKNKV.

The Cytoplasmic portion of the chain corresponds to 1 to 14 (MFSFVQRFQNVSNQ). The chain crosses the membrane as a helical; Signal-anchor for type II membrane protein span at residues 15 to 35 (AFSMGIVMVVFIMASSYYQLI). Over 36–184 (NNNAFSVPSN…TLTVENKNKV (149 aa)) the chain is Lumenal. 2 N-linked (GlcNAc...) asparagine glycosylation sites follow: N102 and N173.

The protein belongs to the SPCS3 family. In terms of assembly, component of the signal peptidase complex (SPC) composed of a catalytic subunit SEC11 and three accessory subunits SPC1, SPC2 and SPC3. The complex induces a local thinning of the ER membrane which is used to measure the length of the signal peptide (SP) h-region of protein substrates. This ensures the selectivity of the complex towards h-regions shorter than 18-20 amino acids. Interacts with SEC11. SPC associates with the translocon complex.

The protein resides in the endoplasmic reticulum membrane. Essential component of the signal peptidase complex (SPC) which catalyzes the cleavage of N-terminal signal sequences from nascent proteins as they are translocated into the lumen of the endoplasmic reticulum. Essential for the SPC catalytic activity, possibly by stabilizing and positioning the active center of the complex close to the lumenal surface. Essential for viability. This chain is Signal peptidase complex subunit 3 (SPC3), found in Saccharomyces cerevisiae (strain ATCC 204508 / S288c) (Baker's yeast).